Reading from the N-terminus, the 416-residue chain is Gamma-glutamyl phosphate reductase (416 aa).

This sequence belongs to the gamma-glutamyl phosphate reductase family.

The protein localises to the cytoplasm. It catalyses the reaction L-glutamate 5-semialdehyde + phosphate + NADP(+) = L-glutamyl 5-phosphate + NADPH + H(+). It functions in the pathway amino-acid biosynthesis; L-proline biosynthesis; L-glutamate 5-semialdehyde from L-glutamate: step 2/2. Catalyzes the NADPH-dependent reduction of L-glutamate 5-phosphate into L-glutamate 5-semialdehyde and phosphate. The product spontaneously undergoes cyclization to form 1-pyrroline-5-carboxylate. In Vibrio vulnificus (strain CMCP6), this protein is Gamma-glutamyl phosphate reductase.